Reading from the N-terminus, the 319-residue chain is Glutathione synthetase (319 aa).

The region spanning 125–311 (KLFTAWFPEL…ITGMLMDAIE (187 aa)) is the ATP-grasp domain. 151-207 (HQEHGDIILKPLDGMGGTSIFRVKQDDPNLSVIIETLTELSSRFCMAQNFLPAIKEG) is an ATP binding site. Mg(2+) is bound by residues Glu281 and Asn283.

The protein belongs to the prokaryotic GSH synthase family. It depends on Mg(2+) as a cofactor. Mn(2+) serves as cofactor.

It catalyses the reaction gamma-L-glutamyl-L-cysteine + glycine + ATP = glutathione + ADP + phosphate + H(+). The protein operates within sulfur metabolism; glutathione biosynthesis; glutathione from L-cysteine and L-glutamate: step 2/2. The protein is Glutathione synthetase of Yersinia pestis.